Reading from the N-terminus, the 786-residue chain is Keratin, type I cytoskeletal 9 (786 aa).

Residues 1–21 (MNCRQFLSSHCSRDSSGGGGG) are disordered. The tract at residues 1–136 (MNCRQFLSSH…SGAGGILGAD (136 aa)) is head. Phosphoserine is present on Ser-52. The coil 1A stretch occupies residues 137–172 (EKTTMQDLNSRLASYLDKVQALEDANKELESKIREW). Residues 137–449 (EKTTMQDLNS…SLLEGGQEDF (313 aa)) enclose the IF rod domain. The segment at 173–191 (YDKQGSRTFHRDYSPYYDT) is linker 1. Residues 192 to 283 (IEDLKNQIVN…KNHEDEMSQL (92 aa)) form a coil 1B region. The interval 284–306 (TGQNSGDVNVEMNAAPGRDLTKI) is linker 12. Residues 307–445 (LNDMREEYER…KTYRSLLEGG (139 aa)) form a coil 2 region. Positions 446 to 760 (QEDFESHESG…GGGSGSKGGS (315 aa)) are tail. Positions 447–786 (EDFESHESGQ…DDTQGYHIQY (340 aa)) are disordered. Gly residues-rich tracts occupy residues 460-657 (GSGG…GGSG) and 664-761 (SSSG…GGSG). Residues 762–773 (RSSQVQSSSSKS) are compositionally biased toward low complexity.

It belongs to the intermediate filament family. As to quaternary structure, heterotetramer of two type I and two type II keratins.

Its function is as follows. May serve an important special function either in the mature palmar and plantar skin tissue or in the morphogenetic program of the formation of these tissues. Plays a role in keratin filament assembly. This Canis lupus familiaris (Dog) protein is Keratin, type I cytoskeletal 9.